A 198-amino-acid chain; its full sequence is MARDMSPVLKRCRALGLEPTFLGIDKKSNRNFARAGKKISEYGTQLREKQKAKFIYGVLEKPFRNNFDKAKKLKYGTTGENLLILLELRLDNVMFRMGYGRTRTEARQIVDHKHVLVNGKCVNIPSYQVKAGDVISIKEKCKSAQRYKDILEVTDGRTVPAWLEADHENLTGTVKEIPTRDQIDVPVNEVLIVELYSK.

Residues 88–153 (LRLDNVMFRM…AQRYKDILEV (66 aa)) enclose the S4 RNA-binding domain.

Belongs to the universal ribosomal protein uS4 family. In terms of assembly, part of the 30S ribosomal subunit. Contacts protein S5. The interaction surface between S4 and S5 is involved in control of translational fidelity.

In terms of biological role, one of the primary rRNA binding proteins, it binds directly to 16S rRNA where it nucleates assembly of the body of the 30S subunit. With S5 and S12 plays an important role in translational accuracy. The chain is Small ribosomal subunit protein uS4 from Lachnoclostridium phytofermentans (strain ATCC 700394 / DSM 18823 / ISDg) (Clostridium phytofermentans).